Here is a 59-residue protein sequence, read N- to C-terminus: Mitochondrial sheath formation-associated protein (59 aa).

At 1–6 (MIVLGW) the chain is on the mitochondrial intermembrane side. 2 consecutive transmembrane segments (helical) span residues 2-22 (IVLG…FPEL) and 7-23 (MFFV…PELM). The Cytoplasmic segment spans residues 24–40 (PPTLKWQERWPVQESKT).

Interacts with VDAC3.

Its subcellular location is the mitochondrion outer membrane. Functionally, regulates sperm development. May be involved in mitochondrial sheath formation. This Homo sapiens (Human) protein is Mitochondrial sheath formation-associated protein.